The primary structure comprises 327 residues: Methionyl-tRNA formyltransferase (327 aa).

117–120 (SLLP) contributes to the (6S)-5,6,7,8-tetrahydrofolate binding site.

The protein belongs to the Fmt family.

The catalysed reaction is L-methionyl-tRNA(fMet) + (6R)-10-formyltetrahydrofolate = N-formyl-L-methionyl-tRNA(fMet) + (6S)-5,6,7,8-tetrahydrofolate + H(+). In terms of biological role, attaches a formyl group to the free amino group of methionyl-tRNA(fMet). The formyl group appears to play a dual role in the initiator identity of N-formylmethionyl-tRNA by promoting its recognition by IF2 and preventing the misappropriation of this tRNA by the elongation apparatus. This Delftia acidovorans (strain DSM 14801 / SPH-1) protein is Methionyl-tRNA formyltransferase.